The sequence spans 73 residues: MKNYSFYQFVMTVRGRHDDKGRLAEEIFDDLAFPKHDDDFNILSDYIETHGDFTLPMSVFDDLYEEYTEWLKF.

Belongs to the UPF0346 family.

The sequence is that of UPF0346 protein SAS1364 from Staphylococcus aureus (strain MSSA476).